The sequence spans 669 residues: Translation factor GUF1, mitochondrial (669 aa).

The N-terminal 49 residues, 1–49 (MWTLVGRGWGCARALAPRATGAALLVAPGPRSAPTLGAAPESWATDRLY), are a transit peptide targeting the mitochondrion. The 182-residue stretch at 66 to 247 (ENIRNFSIVA…AIIERIPPPK (182 aa)) folds into the tr-type G domain. GTP contacts are provided by residues 75-82 (AHVDHGKS), 140-144 (DTPGH), and 194-197 (NKID).

Belongs to the TRAFAC class translation factor GTPase superfamily. Classic translation factor GTPase family. LepA subfamily.

It is found in the mitochondrion inner membrane. The enzyme catalyses GTP + H2O = GDP + phosphate + H(+). In terms of biological role, promotes mitochondrial protein synthesis. May act as a fidelity factor of the translation reaction, by catalyzing a one-codon backward translocation of tRNAs on improperly translocated ribosomes. Binds to mitochondrial ribosomes in a GTP-dependent manner. The sequence is that of Translation factor GUF1, mitochondrial from Homo sapiens (Human).